A 577-amino-acid chain; its full sequence is Pentatricopeptide repeat-containing protein At1g63400 (577 aa).

PPR repeat units lie at residues 49–83, 84–118, 119–153, 154–188, 189–223, 224–258, 259–293, 294–328, 329–363, 364–398, 399–433, 434–468, 469–503, 504–538, and 539–573; these read GSGD…RPLP, SIFE…GISH, NLYT…GYEP, SIVT…GYRP, DTIT…GCQP, NLVT…KIEA, NVVI…GVRP, NVIT…KINP, NVVT…SIDP, DIFT…DCFP, NVVT…GLVG, NTVT…GVHP, NIMT…KMEP, TIYT…GVKP, and DVII…GPLP.

This sequence belongs to the PPR family. P subfamily.

This is Pentatricopeptide repeat-containing protein At1g63400 from Arabidopsis thaliana (Mouse-ear cress).